The chain runs to 78 residues: MSRVCQLTGKKANNAYAISHSHRRTKRLQNVNLQEKRIWWPEGNRFVKLRLSTKAIKTLQKKGLSAYARELGIDLKRL.

The protein belongs to the bacterial ribosomal protein bL28 family.

The protein is Large ribosomal subunit protein bL28 of Synechococcus sp. (strain ATCC 27144 / PCC 6301 / SAUG 1402/1) (Anacystis nidulans).